Consider the following 58-residue polypeptide: uncharacterized protein (58 aa).

Low complexity predominate over residues 23–51; it reads TTTSTSTTTTSTTTSTTTSTTTTTTTTTT. A disordered region spans residues 23–58; it reads TTTSTSTTTTSTTTSTTTSTTTTTTTTTTKDFNTET.

This is an uncharacterized protein from Dictyostelium discoideum (Social amoeba).